We begin with the raw amino-acid sequence, 227 residues long: Cytochrome c oxidase subunit 2 (227 aa).

Topologically, residues methionine 1–serine 14 are mitochondrial intermembrane. A helical transmembrane segment spans residues proline 15–methionine 45. The Mitochondrial matrix portion of the chain corresponds to leucine 46–glutamine 59. Residues glutamate 60 to methionine 87 traverse the membrane as a helical segment. At aspartate 88–leucine 227 the chain is on the mitochondrial intermembrane side. Cu cation contacts are provided by histidine 161, cysteine 196, glutamate 198, cysteine 200, histidine 204, and methionine 207. Glutamate 198 provides a ligand contact to Mg(2+).

This sequence belongs to the cytochrome c oxidase subunit 2 family. In terms of assembly, component of the cytochrome c oxidase (complex IV, CIV), a multisubunit enzyme composed of 14 subunits. The complex is composed of a catalytic core of 3 subunits MT-CO1, MT-CO2 and MT-CO3, encoded in the mitochondrial DNA, and 11 supernumerary subunits COX4I, COX5A, COX5B, COX6A, COX6B, COX6C, COX7A, COX7B, COX7C, COX8 and NDUFA4, which are encoded in the nuclear genome. The complex exists as a monomer or a dimer and forms supercomplexes (SCs) in the inner mitochondrial membrane with NADH-ubiquinone oxidoreductase (complex I, CI) and ubiquinol-cytochrome c oxidoreductase (cytochrome b-c1 complex, complex III, CIII), resulting in different assemblies (supercomplex SCI(1)III(2)IV(1) and megacomplex MCI(2)III(2)IV(2)). Found in a complex with TMEM177, COA6, COX18, COX20, SCO1 and SCO2. Interacts with TMEM177 in a COX20-dependent manner. Interacts with COX20. Interacts with COX16. Cu cation is required as a cofactor.

It localises to the mitochondrion inner membrane. It catalyses the reaction 4 Fe(II)-[cytochrome c] + O2 + 8 H(+)(in) = 4 Fe(III)-[cytochrome c] + 2 H2O + 4 H(+)(out). Functionally, component of the cytochrome c oxidase, the last enzyme in the mitochondrial electron transport chain which drives oxidative phosphorylation. The respiratory chain contains 3 multisubunit complexes succinate dehydrogenase (complex II, CII), ubiquinol-cytochrome c oxidoreductase (cytochrome b-c1 complex, complex III, CIII) and cytochrome c oxidase (complex IV, CIV), that cooperate to transfer electrons derived from NADH and succinate to molecular oxygen, creating an electrochemical gradient over the inner membrane that drives transmembrane transport and the ATP synthase. Cytochrome c oxidase is the component of the respiratory chain that catalyzes the reduction of oxygen to water. Electrons originating from reduced cytochrome c in the intermembrane space (IMS) are transferred via the dinuclear copper A center (CU(A)) of subunit 2 and heme A of subunit 1 to the active site in subunit 1, a binuclear center (BNC) formed by heme A3 and copper B (CU(B)). The BNC reduces molecular oxygen to 2 water molecules using 4 electrons from cytochrome c in the IMS and 4 protons from the mitochondrial matrix. This is Cytochrome c oxidase subunit 2 (MT-CO2) from Lemur catta (Ring-tailed lemur).